We begin with the raw amino-acid sequence, 331 residues long: NADH-quinone oxidoreductase subunit H 2 (331 aa).

Helical transmembrane passes span Ala-6–Ala-26, Ile-79–Pro-99, Val-120–Gly-140, Gly-155–Met-175, Pro-193–Ile-213, Leu-242–Phe-262, Leu-271–Val-291, and Val-310–Gly-330.

This sequence belongs to the complex I subunit 1 family. NDH-1 is composed of 14 different subunits. Subunits NuoA, H, J, K, L, M, N constitute the membrane sector of the complex.

Its subcellular location is the cell inner membrane. It catalyses the reaction a quinone + NADH + 5 H(+)(in) = a quinol + NAD(+) + 4 H(+)(out). Functionally, NDH-1 shuttles electrons from NADH, via FMN and iron-sulfur (Fe-S) centers, to quinones in the respiratory chain. The immediate electron acceptor for the enzyme in this species is believed to be ubiquinone. Couples the redox reaction to proton translocation (for every two electrons transferred, four hydrogen ions are translocated across the cytoplasmic membrane), and thus conserves the redox energy in a proton gradient. This subunit may bind ubiquinone. The protein is NADH-quinone oxidoreductase subunit H 2 of Syntrophobacter fumaroxidans (strain DSM 10017 / MPOB).